Reading from the N-terminus, the 259-residue chain is Large ribosomal subunit protein uL3c (259 aa).

The transit peptide at 1–37 (LKTTPLTLRSPFLHRLPLRALKTHKPTSLHISKSSIS) directs the protein to the chloroplast. Residues 176-211 (MTHGSKSHRQLGSIGAGTTPGRVYKGKKMPGRMGGT) form a disordered region. Positions 199 to 211 (YKGKKMPGRMGGT) are enriched in basic residues.

This sequence belongs to the universal ribosomal protein uL3 family. Part of the 50S ribosomal subunit.

It is found in the plastid. Its subcellular location is the chloroplast. One of the primary rRNA binding proteins, it binds directly near the 3'-end of the 23S rRNA, where it nucleates assembly of the 50S subunit. The sequence is that of Large ribosomal subunit protein uL3c (RPL3) from Nicotiana tabacum (Common tobacco).